Consider the following 245-residue polypeptide: Tetraspanin-6 (245 aa).

At M1–S19 the chain is on the cytoplasmic side. Residues V20–I40 form a helical membrane-spanning segment. Residues W41–N59 are Extracellular-facing. A helical transmembrane segment spans residues V60–F80. Residues A81 to Y93 lie on the Cytoplasmic side of the membrane. The helical transmembrane segment at A94–F114 threads the bilayer. The Extracellular segment spans residues R115 to E208. N134 is a glycosylation site (N-linked (GlcNAc...) asparagine). The helical transmembrane segment at M209 to L229 threads the bilayer. Over A230–V245 the chain is Cytoplasmic.

This sequence belongs to the tetraspanin (TM4SF) family.

The protein localises to the membrane. The polypeptide is Tetraspanin-6 (Tspan6) (Mus musculus (Mouse)).